The chain runs to 131 residues: Small ribosomal subunit protein eS8 (131 aa).

Positions 15–36 are disordered; sequence PSGGKKGRVRKTKKKALGGGPP. Positions 17 to 30 are enriched in basic residues; sequence GGKKGRVRKTKKKA.

The protein belongs to the eukaryotic ribosomal protein eS8 family. As to quaternary structure, part of the 30S ribosomal subunit.

This is Small ribosomal subunit protein eS8 from Pyrobaculum calidifontis (strain DSM 21063 / JCM 11548 / VA1).